The following is a 437-amino-acid chain: Tryptophan--tRNA ligase (437 aa).

The short motif at 74–82 (PSGKVHLGH) is the 'HIGH' region element. A 'KMSKS' region motif is present at residues 321–325 (KMSSS).

This sequence belongs to the class-I aminoacyl-tRNA synthetase family.

The protein resides in the cytoplasm. The enzyme catalyses tRNA(Trp) + L-tryptophan + ATP = L-tryptophyl-tRNA(Trp) + AMP + diphosphate + H(+). The polypeptide is Tryptophan--tRNA ligase (Methanosarcina acetivorans (strain ATCC 35395 / DSM 2834 / JCM 12185 / C2A)).